We begin with the raw amino-acid sequence, 466 residues long: Cysteine--tRNA ligase (466 aa).

Position 28 (Cys28) interacts with Zn(2+). A 'HIGH' region motif is present at residues Pro30–Asn40. Positions 208, 233, and 237 each coordinate Zn(2+). The 'KMSKS' region signature appears at Lys265–Ser269. Residue Lys268 coordinates ATP.

The protein belongs to the class-I aminoacyl-tRNA synthetase family. As to quaternary structure, monomer. Requires Zn(2+) as cofactor.

The protein localises to the cytoplasm. It carries out the reaction tRNA(Cys) + L-cysteine + ATP = L-cysteinyl-tRNA(Cys) + AMP + diphosphate. This is Cysteine--tRNA ligase from Staphylococcus aureus (strain bovine RF122 / ET3-1).